The chain runs to 455 residues: tRNA modification GTPase MnmE (455 aa).

Residue arginine 22 participates in (6S)-5-formyl-5,6,7,8-tetrahydrofolate binding. The segment at 43-67 is disordered; the sequence is RRATRAALRSPPSGPGPTGPGPEEG. (6S)-5-formyl-5,6,7,8-tetrahydrofolate contacts are provided by glutamate 92 and arginine 132. One can recognise a TrmE-type G domain in the interval 228 to 381; that stretch reads GLQVAVVGAP…LEAALESRAR (154 aa). Residue asparagine 238 coordinates K(+). GTP contacts are provided by residues 238 to 243, 257 to 263, and 282 to 285; these read NVGKSS, SDIAGTT, and DTAG. Serine 242 is a Mg(2+) binding site. K(+)-binding residues include serine 257, isoleucine 259, and threonine 262. A Mg(2+)-binding site is contributed by threonine 263. Lysine 455 is a binding site for (6S)-5-formyl-5,6,7,8-tetrahydrofolate.

It belongs to the TRAFAC class TrmE-Era-EngA-EngB-Septin-like GTPase superfamily. TrmE GTPase family. In terms of assembly, homodimer. Heterotetramer of two MnmE and two MnmG subunits. K(+) is required as a cofactor.

The protein resides in the cytoplasm. Its function is as follows. Exhibits a very high intrinsic GTPase hydrolysis rate. Involved in the addition of a carboxymethylaminomethyl (cmnm) group at the wobble position (U34) of certain tRNAs, forming tRNA-cmnm(5)s(2)U34. The sequence is that of tRNA modification GTPase MnmE from Rhodospirillum rubrum (strain ATCC 11170 / ATH 1.1.1 / DSM 467 / LMG 4362 / NCIMB 8255 / S1).